Reading from the N-terminus, the 333-residue chain is DNA-directed RNA polymerase subunit alpha (333 aa).

Residues 1–234 (MQISVNEFLT…QQLAAFVDLK (234 aa)) are alpha N-terminal domain (alpha-NTD). The tract at residues 248-333 (IDPILLRPVD…SLKKDDKATA (86 aa)) is alpha C-terminal domain (alpha-CTD).

This sequence belongs to the RNA polymerase alpha chain family. In terms of assembly, homodimer. The RNAP catalytic core consists of 2 alpha, 1 beta, 1 beta' and 1 omega subunit. When a sigma factor is associated with the core the holoenzyme is formed, which can initiate transcription.

It carries out the reaction RNA(n) + a ribonucleoside 5'-triphosphate = RNA(n+1) + diphosphate. Functionally, DNA-dependent RNA polymerase catalyzes the transcription of DNA into RNA using the four ribonucleoside triphosphates as substrates. This chain is DNA-directed RNA polymerase subunit alpha, found in Pseudomonas entomophila (strain L48).